The sequence spans 212 residues: Redox-sensing transcriptional repressor Rex (212 aa).

A DNA-binding region (H-T-H motif) is located at residues 18–57 (LYYRFVNTLKSKGIDRVNSKAISEALNIESATIRRDFSYF). Position 92–97 (92–97 (GVGNLG)) interacts with NAD(+).

The protein belongs to the transcriptional regulatory Rex family. As to quaternary structure, homodimer.

Its subcellular location is the cytoplasm. In terms of biological role, modulates transcription in response to changes in cellular NADH/NAD(+) redox state. This is Redox-sensing transcriptional repressor Rex from Staphylococcus haemolyticus (strain JCSC1435).